The primary structure comprises 317 residues: Aspartate carbamoyltransferase catalytic subunit (317 aa).

Residues Arg-66 and Thr-67 each contribute to the carbamoyl phosphate site. Lys-94 serves as a coordination point for L-aspartate. Carbamoyl phosphate-binding residues include Arg-116, His-144, and Gln-147. The L-aspartate site is built by Arg-177 and Arg-231. The carbamoyl phosphate site is built by Gly-272 and Pro-273.

It belongs to the aspartate/ornithine carbamoyltransferase superfamily. ATCase family. Heterododecamer (2C3:3R2) of six catalytic PyrB chains organized as two trimers (C3), and six regulatory PyrI chains organized as three dimers (R2).

The catalysed reaction is carbamoyl phosphate + L-aspartate = N-carbamoyl-L-aspartate + phosphate + H(+). The protein operates within pyrimidine metabolism; UMP biosynthesis via de novo pathway; (S)-dihydroorotate from bicarbonate: step 2/3. In terms of biological role, catalyzes the condensation of carbamoyl phosphate and aspartate to form carbamoyl aspartate and inorganic phosphate, the committed step in the de novo pyrimidine nucleotide biosynthesis pathway. The protein is Aspartate carbamoyltransferase catalytic subunit of Bradyrhizobium sp. (strain BTAi1 / ATCC BAA-1182).